Here is a 580-residue protein sequence, read N- to C-terminus: Zinc finger protein 271 (580 aa).

18 C2H2-type zinc fingers span residues 78 to 100, 104 to 126, 132 to 154, 160 to 182, 188 to 210, 216 to 238, 244 to 266, 272 to 294, 300 to 322, 328 to 350, 356 to 378, 384 to 406, 412 to 434, 440 to 462, 468 to 490, 496 to 518, 524 to 545, and 551 to 573; these read YNCD…QRTH, YECE…QRIH, YPCS…QRVH, YKCD…QRIH, YQCS…LRIH, YMCN…QRIH, YPCA…RRIH, YKCS…QRIH, YPCN…QRIH, YPCS…YRIH, YECD…QRIH, YPCN…QRVH, YTCN…QRVH, YHCS…HRVH, YACT…QRIH, YKCM…QRIH, and YPCA…QRVH.

Belongs to the krueppel C2H2-type zinc-finger protein family. In terms of tissue distribution, selectively expressed in adult testis.

It localises to the nucleus. Functionally, may act to control gene activity during the pachytene stage of meiotic prophase. May function as a transcription activator. The sequence is that of Zinc finger protein 271 (Znf271) from Mus musculus (Mouse).